The primary structure comprises 371 residues: Peptide chain release factor 2 (371 aa).

At Gln-253 the chain carries N5-methylglutamine.

Belongs to the prokaryotic/mitochondrial release factor family. Methylated by PrmC. Methylation increases the termination efficiency of RF2.

The protein resides in the cytoplasm. Its function is as follows. Peptide chain release factor 2 directs the termination of translation in response to the peptide chain termination codons UGA and UAA. This Mycobacterium bovis (strain ATCC BAA-935 / AF2122/97) protein is Peptide chain release factor 2 (prfB).